The chain runs to 456 residues: Bifunctional protein GlmU (456 aa).

Positions 1–229 (MSNSAMSVVI…LSEVEGVNNR (229 aa)) are pyrophosphorylase. Residues 11 to 14 (LAAG), Lys-25, Gln-76, 81 to 82 (GT), 103 to 105 (YGD), Gly-140, Glu-154, Asn-169, and Asn-227 contribute to the UDP-N-acetyl-alpha-D-glucosamine site. Asp-105 contacts Mg(2+). Asn-227 serves as a coordination point for Mg(2+). Residues 230 to 250 (LQLSALERVYQREQADRLLLA) are linker. The segment at 251-456 (GVMLLDPARF…SGWQRPVKKK (206 aa)) is N-acetyltransferase. 2 residues coordinate UDP-N-acetyl-alpha-D-glucosamine: Arg-333 and Lys-351. Residue His-363 is the Proton acceptor of the active site. The UDP-N-acetyl-alpha-D-glucosamine site is built by Tyr-366 and Asn-377. Acetyl-CoA is bound by residues Ala-380, 386-387 (NY), Ser-405, Ala-423, and Arg-440.

The protein in the N-terminal section; belongs to the N-acetylglucosamine-1-phosphate uridyltransferase family. This sequence in the C-terminal section; belongs to the transferase hexapeptide repeat family. As to quaternary structure, homotrimer. The cofactor is Mg(2+).

It localises to the cytoplasm. The enzyme catalyses alpha-D-glucosamine 1-phosphate + acetyl-CoA = N-acetyl-alpha-D-glucosamine 1-phosphate + CoA + H(+). The catalysed reaction is N-acetyl-alpha-D-glucosamine 1-phosphate + UTP + H(+) = UDP-N-acetyl-alpha-D-glucosamine + diphosphate. It functions in the pathway nucleotide-sugar biosynthesis; UDP-N-acetyl-alpha-D-glucosamine biosynthesis; N-acetyl-alpha-D-glucosamine 1-phosphate from alpha-D-glucosamine 6-phosphate (route II): step 2/2. Its pathway is nucleotide-sugar biosynthesis; UDP-N-acetyl-alpha-D-glucosamine biosynthesis; UDP-N-acetyl-alpha-D-glucosamine from N-acetyl-alpha-D-glucosamine 1-phosphate: step 1/1. The protein operates within bacterial outer membrane biogenesis; LPS lipid A biosynthesis. Catalyzes the last two sequential reactions in the de novo biosynthetic pathway for UDP-N-acetylglucosamine (UDP-GlcNAc). The C-terminal domain catalyzes the transfer of acetyl group from acetyl coenzyme A to glucosamine-1-phosphate (GlcN-1-P) to produce N-acetylglucosamine-1-phosphate (GlcNAc-1-P), which is converted into UDP-GlcNAc by the transfer of uridine 5-monophosphate (from uridine 5-triphosphate), a reaction catalyzed by the N-terminal domain. The protein is Bifunctional protein GlmU of Pectobacterium carotovorum subsp. carotovorum (strain PC1).